Consider the following 248-residue polypeptide: Urease accessory protein UreG 1 (248 aa).

Over residues Met1–Gly14 the composition is skewed to basic and acidic residues. Residues Met1 to Pro36 form a disordered region. Gly53–Thr60 provides a ligand contact to GTP.

Belongs to the SIMIBI class G3E GTPase family. UreG subfamily. In terms of assembly, homodimer. UreD, UreF and UreG form a complex that acts as a GTP-hydrolysis-dependent molecular chaperone, activating the urease apoprotein by helping to assemble the nickel containing metallocenter of UreC. The UreE protein probably delivers the nickel.

The protein localises to the cytoplasm. Its function is as follows. Facilitates the functional incorporation of the urease nickel metallocenter. This process requires GTP hydrolysis, probably effectuated by UreG. This chain is Urease accessory protein UreG 1, found in Saccharopolyspora erythraea (strain ATCC 11635 / DSM 40517 / JCM 4748 / NBRC 13426 / NCIMB 8594 / NRRL 2338).